The following is a 194-amino-acid chain: Fibroblast growth factor 7 (194 aa).

An N-terminal signal peptide occupies residues 1-31; it reads MHKWILTWILPTLLYRSCFHIICLVGTISLA. Asparagine 45 carries N-linked (GlcNAc...) asparagine glycosylation.

This sequence belongs to the heparin-binding growth factors family. Interacts with FGFBP1. Interacts with FGFR2. Affinity between fibroblast growth factors (FGFs) and their receptors is increased by heparan sulfate glycosaminoglycans that function as coreceptors. Epithelial cell.

The protein resides in the secreted. Functionally, plays an important role in the regulation of embryonic development, cell proliferation and cell differentiation. Required for normal branching morphogenesis. Growth factor active on keratinocytes. Possible major paracrine effector of normal epithelial cell proliferation. This Homo sapiens (Human) protein is Fibroblast growth factor 7 (FGF7).